We begin with the raw amino-acid sequence, 44 residues long: Large ribosomal subunit protein bL36 (44 aa).

This sequence belongs to the bacterial ribosomal protein bL36 family.

This is Large ribosomal subunit protein bL36 from Pseudoalteromonas translucida (strain TAC 125).